A 457-amino-acid chain; its full sequence is uncharacterized protein (457 aa).

A run of 14 helical transmembrane segments spans residues 15–35, 54–74, 87–107, 112–132, 144–164, 166–186, 205–225, 229–249, 269–289, 308–328, 334–354, 357–377, 400–420, and 428–448; these read YGAILTIVIGISMAVLDGAIA, IWVVNAYQIAIVISLLSFSFL, GLVVFLLSSLFCALSDSLQML, VIQGFGGAALMSVNTALIRLI, INSFIVAVSSAAGPTIAAAIL, IASWKWLFLINVPLGIIALLL, LPSAVMNALTFGLLITALSGF, QSLTLIAAELVVMVVVGIFFI, LFSLSICTSVCSFCAQMLAMV, LLLTPWPLATMVMAPLAGYLI, GLLGALGLFIMAAGLFSLVLL, SPADINIIWPMILCGAGFGLF, MLGTARLLGQSSGAALVALML, and THVSLMAAAILAVIAACVSGL.

The protein belongs to the major facilitator superfamily. TCR/Tet family.

It localises to the cell inner membrane. This is an uncharacterized protein from Escherichia coli (strain K12).